The chain runs to 326 residues: Apoptosis facilitator Bcl-2-like protein 14 (326 aa).

The residue at position 44 (Ser44) is a Phosphoserine. Positions Thr99 to Gln127 are disordered. The BH3 motif lies at Ile211–Glu225. A BH2 motif is present at residues Trp307 to Trp314.

The protein belongs to the Bcl-2 family. Post-translationally, phosphorylated by MELK, leading to inhibit its pro-apoptotic function.

The protein localises to the cytoplasm. Plays a role in apoptosis. The protein is Apoptosis facilitator Bcl-2-like protein 14 (Bcl2l14) of Rattus norvegicus (Rat).